Here is a 319-residue protein sequence, read N- to C-terminus: Acetyl-coenzyme A carboxylase carboxyl transferase subunit alpha (319 aa).

The region spanning 38–293 (HALQDKLRLR…KAVLLNELDA (256 aa)) is the CoA carboxyltransferase C-terminal domain.

This sequence belongs to the AccA family. Acetyl-CoA carboxylase is a heterohexamer composed of biotin carboxyl carrier protein (AccB), biotin carboxylase (AccC) and two subunits each of ACCase subunit alpha (AccA) and ACCase subunit beta (AccD).

It is found in the cytoplasm. The catalysed reaction is N(6)-carboxybiotinyl-L-lysyl-[protein] + acetyl-CoA = N(6)-biotinyl-L-lysyl-[protein] + malonyl-CoA. It functions in the pathway lipid metabolism; malonyl-CoA biosynthesis; malonyl-CoA from acetyl-CoA: step 1/1. Component of the acetyl coenzyme A carboxylase (ACC) complex. First, biotin carboxylase catalyzes the carboxylation of biotin on its carrier protein (BCCP) and then the CO(2) group is transferred by the carboxyltransferase to acetyl-CoA to form malonyl-CoA. This Stenotrophomonas maltophilia (strain R551-3) protein is Acetyl-coenzyme A carboxylase carboxyl transferase subunit alpha.